Here is a 518-residue protein sequence, read N- to C-terminus: Motile sperm domain-containing protein 2 (518 aa).

The Cytoplasmic segment spans residues 1-496 (MAENHAQNKA…QVQRCIWFQQ (496 aa)). The region spanning 82-239 (ESSIPRWLLE…HMGGTDPFKY (158 aa)) is the CRAL-TRIO domain. Residues 252–308 (PLCENGPITSEDETSSKEDIESDGKETLETISNEEQTPLLKKINPTESTSKAEENEK) are disordered. Residues 265 to 279 (TSSKEDIESDGKETL) are compositionally biased toward basic and acidic residues. Residues 327-445 (LLHISPAEEL…MEHRLRCHTV (119 aa)) form the MSP domain. Residues 365–366 (RT) are required for FFAT motif binding and phosphorylated FFAT motif binding. The helical; Anchor for type IV membrane protein transmembrane segment at 497–518 (LLLSLTMLLLAFVTSFFYLLYS) threads the bilayer.

Homooligomer. Interacts (via MSP domain) with STARD3NL (via FFAT motif), RMDN3 (via FFAT motif), OSBPL1A (via FFAT motif) and CERT1 (via FFAT motif). Interacts (via MSP domain) with STARD3 (via phosphorylated FFAT motif); this interaction depends on the critical phosphorylation of STARD3 on 'Ser-209'. Interacts with RB1CC1 (via phosphorylated FFAT motif), MIGA2 (via phosphorylated FFAT motif) and OSBPL1A (via FFAT motif). Highly expressed in CD14(+) monocytes, and at lower levels in neutrophils. Does not show significant expression in B-cells or T-cells.

It is found in the endoplasmic reticulum membrane. In terms of biological role, endoplasmic reticulum-anchored protein that mediates the formation of contact sites between the endoplasmic (ER) and endosomes, mitochondria or Golgi through interaction with conventional- and phosphorylated-FFAT-containing organelle-bound proteins. In addition, forms endoplasmic reticulum (ER)-lipid droplets (LDs) contacts through a direct protein-membrane interaction and participates in LDs homeostasis. The attachment mechanism involves an amphipathic helix that has an affinity for lipid packing defects present at the surface of LDs. Promotes migration of primary monocytes and neutrophils, in response to various chemokines. The polypeptide is Motile sperm domain-containing protein 2 (Homo sapiens (Human)).